The following is a 420-amino-acid chain: Glucose-1-phosphate adenylyltransferase (420 aa).

Alpha-D-glucose 1-phosphate contacts are provided by residues tyrosine 107, glycine 173, 188-189 (EK), and serine 206.

The protein belongs to the bacterial/plant glucose-1-phosphate adenylyltransferase family. Homotetramer.

It carries out the reaction alpha-D-glucose 1-phosphate + ATP + H(+) = ADP-alpha-D-glucose + diphosphate. The protein operates within glycan biosynthesis; glycogen biosynthesis. Involved in the biosynthesis of ADP-glucose, a building block required for the elongation reactions to produce glycogen. Catalyzes the reaction between ATP and alpha-D-glucose 1-phosphate (G1P) to produce pyrophosphate and ADP-Glc. The protein is Glucose-1-phosphate adenylyltransferase of Shewanella baltica (strain OS185).